Reading from the N-terminus, the 391-residue chain is F-box only protein 5 (391 aa).

The region spanning 198–245 is the F-box domain; that stretch reads AELFHRDFKHLLTKILRHLSAMDLINVISVSTTWRKILQKDNSAYNSY. A ZBR-type zinc finger spans residues 318–366; it reads CLKVCVDCSSPAKYDPYLHRATCTRESCKFDFCTLCSCKYHGSKCCQTS. Positions 322, 325, 340, 345, 350, 353, 358, and 363 each coordinate Zn(2+). The interval 365–391 is disordered; that stretch reads TSKPRSYRVPSEPLPGSKKSKQNLRRL. Residues 382–391 are compositionally biased toward basic residues; that stretch reads KKSKQNLRRL.

Part of a SCF (SKP1-cullin-F-box) protein ligase complex. Interacts with btrc. Interacts with skp1. Interacts with cdc20. Interacts with pin1; stabilizes fbxo5 by preventing its association with btrc in an isomerization-dependent pathway; this interaction is present during G2 phase and prevents fbxo5 degradation. Interacts with plk1. Proteolysed; proteolysis is induced by both cyclin B-cdk1 and cyclin A-cdk1/2 complex through probable phosphorylation. Proteolysis is inhibited by pin1 during G2.

Its subcellular location is the nucleus. It localises to the cytoplasm. It is found in the cytoskeleton. The protein resides in the spindle. The protein localises to the microtubule organizing center. Its subcellular location is the centrosome. It participates in protein modification; protein ubiquitination. Its function is as follows. Regulates progression through early mitosis by inhibiting the anaphase promoting complex/cyclosome (APC). Binds to the APC activators cdc20 to prevent APC activation. Can also bind directly to the APC to inhibit substrate-binding. Required to arrest unfertilized eggs at metaphase of meiosis II, by preventing their release from metaphase of meiosis II, through inhibition of APC-dependent cyclin B destruction leading to stabilization of cyclin B-cdk1 complex activity. The chain is F-box only protein 5 from Xenopus tropicalis (Western clawed frog).